The following is a 204-amino-acid chain: N-(5'-phosphoribosyl)anthranilate isomerase (204 aa).

The protein belongs to the TrpF family.

It carries out the reaction N-(5-phospho-beta-D-ribosyl)anthranilate = 1-(2-carboxyphenylamino)-1-deoxy-D-ribulose 5-phosphate. The protein operates within amino-acid biosynthesis; L-tryptophan biosynthesis; L-tryptophan from chorismate: step 3/5. The sequence is that of N-(5'-phosphoribosyl)anthranilate isomerase from Oceanobacillus iheyensis (strain DSM 14371 / CIP 107618 / JCM 11309 / KCTC 3954 / HTE831).